Here is a 280-residue protein sequence, read N- to C-terminus: Energy-coupling factor transporter ATP-binding protein EcfA1 (280 aa).

The region spanning 6 to 244 (IECKNVVYKY…VPLMKNIGLD (239 aa)) is the ABC transporter domain. 43–50 (GHNGSGKS) is a binding site for ATP.

The protein belongs to the ABC transporter superfamily. Energy-coupling factor EcfA family. Forms a stable energy-coupling factor (ECF) transporter complex composed of 2 membrane-embedded substrate-binding proteins (S component), 2 ATP-binding proteins (A component) and 2 transmembrane proteins (T component).

The protein resides in the cell membrane. In terms of biological role, ATP-binding (A) component of a common energy-coupling factor (ECF) ABC-transporter complex. Unlike classic ABC transporters this ECF transporter provides the energy necessary to transport a number of different substrates. In Clostridium novyi (strain NT), this protein is Energy-coupling factor transporter ATP-binding protein EcfA1.